Consider the following 106-residue polypeptide: A-type ATP synthase subunit F (106 aa).

It belongs to the V-ATPase F subunit family. As to quaternary structure, has multiple subunits with at least A(3), B(3), C, D, E, F, H, I and proteolipid K(x).

It is found in the cell membrane. In terms of biological role, component of the A-type ATP synthase that produces ATP from ADP in the presence of a proton gradient across the membrane. This Methanothermobacter thermautotrophicus (strain ATCC 29096 / DSM 1053 / JCM 10044 / NBRC 100330 / Delta H) (Methanobacterium thermoautotrophicum) protein is A-type ATP synthase subunit F.